A 281-amino-acid chain; its full sequence is MKRVGAHVSIAGGVENAPLNAQKIGAKAFAMFTRNQRQWHSAPLSTASIEAFRRNCEEAGFLPQHILPHDSYLINLGAPEVEKLEKSRKAFTTEMQRAEALGLTMLNFHPGSHLNLVSENECLATIAESVNLSLNATAGVTAVIENTAGQGSNLGWRFEHLARIIELVEDKSRVGVCLDTCHLFASGYDLRTPEAFDATLAEFDRVVGLSYLRGMHLNDAKQKLGSRVDRHACIGEGMIGREAFVHLMQHPAMEEIPLILETPNSESWAEEIEMLYSFEKE.

The Zn(2+) site is built by His69, His109, Glu145, Asp179, His182, His216, Asp229, His231, and Glu261.

Belongs to the AP endonuclease 2 family. The cofactor is Zn(2+).

It catalyses the reaction Endonucleolytic cleavage to 5'-phosphooligonucleotide end-products.. Endonuclease IV plays a role in DNA repair. It cleaves phosphodiester bonds at apurinic or apyrimidinic (AP) sites, generating a 3'-hydroxyl group and a 5'-terminal sugar phosphate. In Chlorobaculum parvum (strain DSM 263 / NCIMB 8327) (Chlorobium vibrioforme subsp. thiosulfatophilum), this protein is Probable endonuclease 4.